The sequence spans 347 residues: S-adenosylmethionine:tRNA ribosyltransferase-isomerase (347 aa).

The protein belongs to the QueA family. In terms of assembly, monomer.

It localises to the cytoplasm. The enzyme catalyses 7-aminomethyl-7-carbaguanosine(34) in tRNA + S-adenosyl-L-methionine = epoxyqueuosine(34) in tRNA + adenine + L-methionine + 2 H(+). Its pathway is tRNA modification; tRNA-queuosine biosynthesis. Its function is as follows. Transfers and isomerizes the ribose moiety from AdoMet to the 7-aminomethyl group of 7-deazaguanine (preQ1-tRNA) to give epoxyqueuosine (oQ-tRNA). In Bordetella pertussis (strain Tohama I / ATCC BAA-589 / NCTC 13251), this protein is S-adenosylmethionine:tRNA ribosyltransferase-isomerase.